Here is a 168-residue protein sequence, read N- to C-terminus: Inorganic pyrophosphatase (168 aa).

3 residues coordinate substrate: Lys23, Arg37, and Tyr49. Residues Asp59, Asp64, and Asp96 each coordinate Mg(2+). Substrate is bound at residue Tyr133.

The protein belongs to the PPase family. In terms of assembly, homohexamer. Requires Mg(2+) as cofactor.

Its subcellular location is the cytoplasm. It catalyses the reaction diphosphate + H2O = 2 phosphate + H(+). Functionally, catalyzes the hydrolysis of inorganic pyrophosphate (PPi) forming two phosphate ions. This is Inorganic pyrophosphatase from Methanosarcina acetivorans (strain ATCC 35395 / DSM 2834 / JCM 12185 / C2A).